The primary structure comprises 237 residues: Sugar fermentation stimulation protein homolog (237 aa).

This sequence belongs to the SfsA family.

The polypeptide is Sugar fermentation stimulation protein homolog (Colwellia psychrerythraea (strain 34H / ATCC BAA-681) (Vibrio psychroerythus)).